The primary structure comprises 141 residues: ATP synthase epsilon chain (141 aa).

This sequence belongs to the ATPase epsilon chain family. As to quaternary structure, F-type ATPases have 2 components, CF(1) - the catalytic core - and CF(0) - the membrane proton channel. CF(1) has five subunits: alpha(3), beta(3), gamma(1), delta(1), epsilon(1). CF(0) has three main subunits: a, b and c.

The protein localises to the cell membrane. Produces ATP from ADP in the presence of a proton gradient across the membrane. The chain is ATP synthase epsilon chain from Lactococcus lactis subsp. cremoris (strain MG1363).